A 233-amino-acid polypeptide reads, in one-letter code: Glucosamine-6-phosphate deaminase (233 aa).

The active-site Proton acceptor; for enolization step is Asp-62. Asn-128 functions as the For ring-opening step in the catalytic mechanism. The active-site Proton acceptor; for ring-opening step is His-130. Glu-135 serves as the catalytic For ring-opening step.

This sequence belongs to the glucosamine/galactosamine-6-phosphate isomerase family. NagB subfamily.

It carries out the reaction alpha-D-glucosamine 6-phosphate + H2O = beta-D-fructose 6-phosphate + NH4(+). It functions in the pathway amino-sugar metabolism; N-acetylneuraminate degradation; D-fructose 6-phosphate from N-acetylneuraminate: step 5/5. In terms of biological role, catalyzes the reversible isomerization-deamination of glucosamine 6-phosphate (GlcN6P) to form fructose 6-phosphate (Fru6P) and ammonium ion. The protein is Glucosamine-6-phosphate deaminase of Streptococcus thermophilus (strain ATCC BAA-491 / LMD-9).